The chain runs to 411 residues: Putative binding protein BRA0748/BS1330_II0741 (411 aa).

The signal sequence occupies residues 1 to 25 (MLIRKWKAGLLAGLSILALASSADA).

Belongs to the bacterial solute-binding protein 1 family. As to quaternary structure, the complex is composed of two ATP-binding proteins (BRA0745), two transmembrane proteins (BRA0749) and a solute-binding protein (BRA0748).

Its subcellular location is the periplasm. Probably part of an ABC transporter complex. The sequence is that of Putative binding protein BRA0748/BS1330_II0741 from Brucella suis biovar 1 (strain 1330).